Here is a 315-residue protein sequence, read N- to C-terminus: Transaldolase (315 aa).

The active-site Schiff-base intermediate with substrate is Lys131.

The protein belongs to the transaldolase family. Type 1 subfamily. Homodimer.

It localises to the cytoplasm. The catalysed reaction is D-sedoheptulose 7-phosphate + D-glyceraldehyde 3-phosphate = D-erythrose 4-phosphate + beta-D-fructose 6-phosphate. It participates in carbohydrate degradation; pentose phosphate pathway; D-glyceraldehyde 3-phosphate and beta-D-fructose 6-phosphate from D-ribose 5-phosphate and D-xylulose 5-phosphate (non-oxidative stage): step 2/3. Its function is as follows. Transaldolase is important for the balance of metabolites in the pentose-phosphate pathway. This Actinobacillus pleuropneumoniae serotype 3 (strain JL03) protein is Transaldolase.